A 185-amino-acid chain; its full sequence is MATALGFRCLFRTRPAPLCRHVDRLWRNPRRGHRLSPADDELYQRTRISLLQSEFPQAVYIDSYSSRGFTICGNRVFGPCVLLPQTVVQWNVGSHQDITEESFSLFWMLEPRIEIVVVGTGNKTERLHPQVLQAMRQRGIAVEVQDTPNACATFNFLCHEGRVTGAALIPPPGETALASLGQASE.

The protein belongs to the NDUFAF3 family. As to quaternary structure, interacts with NDUFAF4, NDUFS2 and NDUFS3. In terms of tissue distribution, strongly expressed in testis and weakly expressed in the epididymis. Expressed in spermatocytes.

It localises to the nucleus. Its subcellular location is the mitochondrion inner membrane. Essential factor for the assembly of mitochondrial NADH:ubiquinone oxidoreductase complex (complex I). The chain is NADH dehydrogenase [ubiquinone] 1 alpha subcomplex assembly factor 3 (Ndufaf3) from Mus musculus (Mouse).